A 418-amino-acid chain; its full sequence is Serine--tRNA ligase (418 aa).

Residue 227-229 (TSE) coordinates L-serine. ATP is bound by residues 258–260 (RRE) and V274. E281 contributes to the L-serine binding site. An ATP-binding site is contributed by 345-348 (ELTS). T380 contacts L-serine.

This sequence belongs to the class-II aminoacyl-tRNA synthetase family. Type-1 seryl-tRNA synthetase subfamily. As to quaternary structure, homodimer. The tRNA molecule binds across the dimer.

It localises to the cytoplasm. The catalysed reaction is tRNA(Ser) + L-serine + ATP = L-seryl-tRNA(Ser) + AMP + diphosphate + H(+). It catalyses the reaction tRNA(Sec) + L-serine + ATP = L-seryl-tRNA(Sec) + AMP + diphosphate + H(+). It participates in aminoacyl-tRNA biosynthesis; selenocysteinyl-tRNA(Sec) biosynthesis; L-seryl-tRNA(Sec) from L-serine and tRNA(Sec): step 1/1. Catalyzes the attachment of serine to tRNA(Ser). Is also able to aminoacylate tRNA(Sec) with serine, to form the misacylated tRNA L-seryl-tRNA(Sec), which will be further converted into selenocysteinyl-tRNA(Sec). The protein is Serine--tRNA ligase of Rhodococcus jostii (strain RHA1).